A 66-amino-acid chain; its full sequence is Phylloseptin-S1 (66 aa).

The signal sequence occupies residues 1–22; that stretch reads MAFLKKSLFLVLFLGLVSLSIC. Residues 23-46 constitute a propeptide that is removed on maturation; sequence EEEKRETEEEEHDQEEDDKSEEKR. Positions 25 to 44 are disordered; sequence EKRETEEEEHDQEEDDKSEE. Acidic residues predominate over residues 30–41; the sequence is EEEEHDQEEDDK. Phe65 is modified (phenylalanine amide).

As to expression, expressed by the skin glands.

It is found in the secreted. The protein resides in the target cell membrane. Antimicrobial peptide with high activity against Gram-positive bacteria, low activity against Gram-negative bacteria, and moderate activity against fungi. Acts on bacterial biofilms (S.aureus) with the same potency than on bacteria. Acts by causing bacterial membrane disruption inducing leakage of the intracellular content followed by cell death. It adopts an alpha-helical amphipathic structure in membrane environments. Also shows highly potent antiparasitic activity against Leishmania species. Shows low hemolytic activity on horse and human erythrocytes (LC(50)=39 uM). Is also active on human monocytes (IC(50)=23 uM). The sequence is that of Phylloseptin-S1 from Phyllomedusa sauvagei (Sauvage's leaf frog).